The sequence spans 340 residues: Ketol-acid reductoisomerase (NADP(+)) (340 aa).

The region spanning 1–182 (MTVTMQYEKD…GSARVGLLET (182 aa)) is the KARI N-terminal Rossmann domain. Residues 26–29 (YGSQ), Arg49, Ser53, and 83–86 (DEIQ) contribute to the NADP(+) site. His108 is an active-site residue. Position 134 (Gly134) interacts with NADP(+). Residues 183-328 (TFKEETEEDL…AELRKAMPFV (146 aa)) form the KARI C-terminal knotted domain. Mg(2+)-binding residues include Asp191, Glu195, Glu227, and Glu231. Position 252 (Ser252) interacts with substrate.

It belongs to the ketol-acid reductoisomerase family. Requires Mg(2+) as cofactor.

It catalyses the reaction (2R)-2,3-dihydroxy-3-methylbutanoate + NADP(+) = (2S)-2-acetolactate + NADPH + H(+). The enzyme catalyses (2R,3R)-2,3-dihydroxy-3-methylpentanoate + NADP(+) = (S)-2-ethyl-2-hydroxy-3-oxobutanoate + NADPH + H(+). It functions in the pathway amino-acid biosynthesis; L-isoleucine biosynthesis; L-isoleucine from 2-oxobutanoate: step 2/4. It participates in amino-acid biosynthesis; L-valine biosynthesis; L-valine from pyruvate: step 2/4. In terms of biological role, involved in the biosynthesis of branched-chain amino acids (BCAA). Catalyzes an alkyl-migration followed by a ketol-acid reduction of (S)-2-acetolactate (S2AL) to yield (R)-2,3-dihydroxy-isovalerate. In the isomerase reaction, S2AL is rearranged via a Mg-dependent methyl migration to produce 3-hydroxy-3-methyl-2-ketobutyrate (HMKB). In the reductase reaction, this 2-ketoacid undergoes a metal-dependent reduction by NADPH to yield (R)-2,3-dihydroxy-isovalerate. This is Ketol-acid reductoisomerase (NADP(+)) from Streptococcus suis (strain 98HAH33).